The primary structure comprises 273 residues: Putative ABC transporter ATP-binding protein DVU_1056 (273 aa).

The ABC transporter domain maps to 10–242 (LSLDDIHFTY…IHHGGEVAHE (233 aa)). 44 to 51 (GHNGSGKT) is a binding site for ATP. The disordered stretch occupies residues 234 to 273 (HHGGEVAHEHPSRGCCHQHDGSHHHAGHDDDHPHTSQTTE). Over residues 235–267 (HGGEVAHEHPSRGCCHQHDGSHHHAGHDDDHPH) the composition is skewed to basic and acidic residues.

It belongs to the ABC transporter superfamily.

The protein localises to the cell inner membrane. Probably part of an ABC transporter complex. Responsible for energy coupling to the transport system. This Nitratidesulfovibrio vulgaris (strain ATCC 29579 / DSM 644 / CCUG 34227 / NCIMB 8303 / VKM B-1760 / Hildenborough) (Desulfovibrio vulgaris) protein is Putative ABC transporter ATP-binding protein DVU_1056.